The following is a 231-amino-acid chain: 5'-methylthioadenosine/S-adenosylhomocysteine nucleosidase (231 aa).

The Proton acceptor role is filled by E13. Residues G79, M154, and 175–176 (ME) contribute to the substrate site. Residue D199 is the Proton donor of the active site.

The protein belongs to the PNP/UDP phosphorylase family. MtnN subfamily.

It carries out the reaction S-adenosyl-L-homocysteine + H2O = S-(5-deoxy-D-ribos-5-yl)-L-homocysteine + adenine. The catalysed reaction is S-methyl-5'-thioadenosine + H2O = 5-(methylsulfanyl)-D-ribose + adenine. The enzyme catalyses 5'-deoxyadenosine + H2O = 5-deoxy-D-ribose + adenine. Its pathway is amino-acid biosynthesis; L-methionine biosynthesis via salvage pathway; S-methyl-5-thio-alpha-D-ribose 1-phosphate from S-methyl-5'-thioadenosine (hydrolase route): step 1/2. Its function is as follows. Catalyzes the irreversible cleavage of the glycosidic bond in both 5'-methylthioadenosine (MTA) and S-adenosylhomocysteine (SAH/AdoHcy) to adenine and the corresponding thioribose, 5'-methylthioribose and S-ribosylhomocysteine, respectively. Also cleaves 5'-deoxyadenosine, a toxic by-product of radical S-adenosylmethionine (SAM) enzymes, into 5-deoxyribose and adenine. In Marinomonas sp. (strain MWYL1), this protein is 5'-methylthioadenosine/S-adenosylhomocysteine nucleosidase.